We begin with the raw amino-acid sequence, 314 residues long: tRNA dimethylallyltransferase 2 (314 aa).

8–15 (GPTGSGKS) contacts ATP. A substrate-binding site is contributed by 10 to 15 (TGSGKS).

Belongs to the IPP transferase family. Monomer. Mg(2+) is required as a cofactor.

It carries out the reaction adenosine(37) in tRNA + dimethylallyl diphosphate = N(6)-dimethylallyladenosine(37) in tRNA + diphosphate. Catalyzes the transfer of a dimethylallyl group onto the adenine at position 37 in tRNAs that read codons beginning with uridine, leading to the formation of N6-(dimethylallyl)adenosine (i(6)A). The polypeptide is tRNA dimethylallyltransferase 2 (Mycobacterium marinum (strain ATCC BAA-535 / M)).